The primary structure comprises 352 residues: Protein-glutamate methylesterase/protein-glutamine glutaminase (352 aa).

The region spanning R5–E122 is the Response regulatory domain. At D56 the chain carries 4-aspartylphosphate. Positions R163–T352 constitute a CheB-type methylesterase domain. Residues S171, H198, and D294 contribute to the active site.

The protein belongs to the CheB family. Phosphorylated by CheA. Phosphorylation of the N-terminal regulatory domain activates the methylesterase activity.

Its subcellular location is the cytoplasm. It carries out the reaction [protein]-L-glutamate 5-O-methyl ester + H2O = L-glutamyl-[protein] + methanol + H(+). The catalysed reaction is L-glutaminyl-[protein] + H2O = L-glutamyl-[protein] + NH4(+). Functionally, involved in chemotaxis. Part of a chemotaxis signal transduction system that modulates chemotaxis in response to various stimuli. Catalyzes the demethylation of specific methylglutamate residues introduced into the chemoreceptors (methyl-accepting chemotaxis proteins or MCP) by CheR. Also mediates the irreversible deamidation of specific glutamine residues to glutamic acid. This is Protein-glutamate methylesterase/protein-glutamine glutaminase from Oceanobacillus iheyensis (strain DSM 14371 / CIP 107618 / JCM 11309 / KCTC 3954 / HTE831).